Reading from the N-terminus, the 547-residue chain is Cytochrome P450 monooxygenase fsoD (547 aa).

Residues 3–23 traverse the membrane as a helical segment; that stretch reads DITLAAVSIGLFFYVGARAVL. Cys490 lines the heme pocket.

The protein belongs to the cytochrome P450 family. The cofactor is heme.

The protein localises to the membrane. It carries out the reaction isomotiol + reduced [NADPH--hemoprotein reductase] + O2 = 2alpha-hydroxyisomotiol + oxidized [NADPH--hemoprotein reductase] + H2O + H(+). It participates in secondary metabolite biosynthesis; terpenoid biosynthesis. Cytochrome P450 monooxygenase; part of the gene cluster that mediates the biosynthesis of the enfumafungin-type antibiotic, fuscoatroside. Within the pathway, fsoD catalyzes the hydroxylation at position C2 of isomotiol to produce 2-alpha-hydroxy-isomotiol. FsoD may also hydroxylate the intermediates 3-O-(beta-D-glucopyranosyl)-isomotiol and 2-deacetoxy-fuscoatroside at the same position C2. The fuscoatroside biosynthesis is initiated by the cyclization of 2,3(S)-oxidosqualene through FsoA's terpene cyclase (TC) domain, leading to the formation of the fernane skeleton isomotiol, harboring a fernane triterpene skeleton with a C8-C9 double bond. Subsequently, C2-alpha-hydroxylation mediated by fsoD results in the production of 2-alpha-hydroxy-isomotiol, which is further acetylated by fsoF. The glycosyltransferase (GT) domain of FsoA may convert isomotiol, 2-alpha-hydroxy-isomotiol, and the acetylated derivative of 2-alpha-hydroxy-isomotiol into their corresponding glycosides 3-O-(beta-D-glucopyranosyl)-isomotiol, 3-O-(beta-D-glucopyranosyl)-2-alpha-hydroxy-isomotiol, and 3-O-(beta-D-glucopyranosyl)-2-alpha-acetoxy-isomotiol, which then undergo oxidative cleavage under the action of fsoE to form s 2-deacetoxy-fuscoatroside, 2-deacetyl-fuscoatroside, and fuscoatroside, respectively. Although hydroxylation followed by acetylation of 3-O-(beta-D-glucopyranosyl)-isomotiol and 2-deacetoxy-fuscoatroside by fsoD and fsoF could not be ruled out, this process is likely to occur with difficulty due to bulky steric hindrance caused by the presence of a glycan at C3 in these compounds. Interestingly, fsoE can also utilize the aglycones isomotiol and 2-alpha-hydroxy-isomotiol as substrates to generate 19-beta-hydroxy-isomotiol and 2-alpha,19-beta-dihydroxy-isomotiol, respectively. These reactions occur with lower efficiency. Finally, fsoE can further convert 2-alpha,19-beta-dihydroxy-isomotiol into 2-alpha-hydroxy-ismotiol-19-one and 2-alpha-hydroxy-ismotiol-19-one into 2-deacetyl-3-deglucopyranosyl-fuscoatroside. This is Cytochrome P450 monooxygenase fsoD from Humicola fuscoatra.